The chain runs to 435 residues: GTPase Der (435 aa).

EngA-type G domains are found at residues 4-167 and 175-350; these read PVVA…GDKA and IRFS…ENQT. Residues 10 to 17, 57 to 61, 119 to 122, 181 to 188, 228 to 232, and 293 to 296 each bind GTP; these read GRPNVGKS, DTGGI, NKAD, DTAGI, and NKWD. Residues 351–435 form the KH-like domain; the sequence is RRIQSSVLND…PIKILARKRK (85 aa).

The protein belongs to the TRAFAC class TrmE-Era-EngA-EngB-Septin-like GTPase superfamily. EngA (Der) GTPase family. Associates with the 50S ribosomal subunit.

GTPase that plays an essential role in the late steps of ribosome biogenesis. The chain is GTPase Der from Lactobacillus johnsonii (strain CNCM I-12250 / La1 / NCC 533).